The sequence spans 504 residues: Pyruvate kinase (504 aa).

Arg53 contacts substrate. K(+) contacts are provided by Asn55, Ser57, Asp88, and Thr89. Residue 55–58 (NFSH) participates in ATP binding. Residues Arg95 and Lys181 each contribute to the ATP site. Glu246 lines the Mg(2+) pocket. Positions 269, 270, and 302 each coordinate substrate. Asp270 serves as a coordination point for Mg(2+).

Belongs to the pyruvate kinase family. In terms of assembly, homotetramer. Mg(2+) is required as a cofactor. K(+) serves as cofactor.

It carries out the reaction pyruvate + ATP = phosphoenolpyruvate + ADP + H(+). It participates in carbohydrate degradation; glycolysis; pyruvate from D-glyceraldehyde 3-phosphate: step 5/5. The chain is Pyruvate kinase (PYK1) from Debaryomyces hansenii (strain ATCC 36239 / CBS 767 / BCRC 21394 / JCM 1990 / NBRC 0083 / IGC 2968) (Yeast).